Reading from the N-terminus, the 135-residue chain is Small ribosomal subunit protein uS9 (135 aa).

Residues 108 to 118 (VGDPRRTEPHK) show a composition bias toward basic and acidic residues. The segment at 108-135 (VGDPRRTEPHKPNRSTKGPRAKRQKSYR) is disordered. A compositionally biased stretch (basic residues) spans 119–135 (PNRSTKGPRAKRQKSYR).

This sequence belongs to the universal ribosomal protein uS9 family.

In Pyrococcus horikoshii (strain ATCC 700860 / DSM 12428 / JCM 9974 / NBRC 100139 / OT-3), this protein is Small ribosomal subunit protein uS9 (rps9).